A 164-amino-acid polypeptide reads, in one-letter code: Protein SprT (164 aa).

Residues 12-157 (CFLQAESFFK…CRRCRQTLVF (146 aa)) form the SprT-like domain. Residue His-69 participates in Zn(2+) binding. The active site involves Glu-70. Position 73 (His-73) interacts with Zn(2+).

The protein belongs to the SprT family. The cofactor is Zn(2+).

The protein localises to the cytoplasm. The chain is Protein SprT from Pseudomonas fluorescens (strain SBW25).